A 687-amino-acid chain; its full sequence is Glycine--tRNA ligase beta subunit (687 aa).

Belongs to the class-II aminoacyl-tRNA synthetase family. In terms of assembly, tetramer of two alpha and two beta subunits.

It localises to the cytoplasm. It catalyses the reaction tRNA(Gly) + glycine + ATP = glycyl-tRNA(Gly) + AMP + diphosphate. This is Glycine--tRNA ligase beta subunit from Neisseria meningitidis serogroup C / serotype 2a (strain ATCC 700532 / DSM 15464 / FAM18).